We begin with the raw amino-acid sequence, 390 residues long: GTPase Obg (390 aa).

In terms of domain architecture, Obg spans 1 to 159 (MKFVDEATIL…RELTLELLLL (159 aa)). Residues 128 to 147 (SRFKSSVNRAPRQKTNGTKG) are disordered. Over residues 129–145 (RFKSSVNRAPRQKTNGT) the composition is skewed to polar residues. Residues 160-333 (ADVGMLGLPN…LCWDVMNFLK (174 aa)) form the OBG-type G domain. GTP-binding positions include 166-173 (GLPNAGKS), 191-195 (FTTLV), 213-216 (DIPG), 283-286 (NKVD), and 314-316 (SAA). Positions 173 and 193 each coordinate Mg(2+).

The protein belongs to the TRAFAC class OBG-HflX-like GTPase superfamily. OBG GTPase family. In terms of assembly, monomer. Mg(2+) serves as cofactor.

It localises to the cytoplasm. An essential GTPase which binds GTP, GDP and possibly (p)ppGpp with moderate affinity, with high nucleotide exchange rates and a fairly low GTP hydrolysis rate. Plays a role in control of the cell cycle, stress response, ribosome biogenesis and in those bacteria that undergo differentiation, in morphogenesis control. The protein is GTPase Obg of Pectobacterium atrosepticum (strain SCRI 1043 / ATCC BAA-672) (Erwinia carotovora subsp. atroseptica).